Here is a 408-residue protein sequence, read N- to C-terminus: Argininosuccinate synthase (408 aa).

ATP-binding positions include 10 to 18 (AYSGGLDTS) and Ala-37. Residues Tyr-90 and Ser-95 each coordinate L-citrulline. Gly-120 provides a ligand contact to ATP. Residues Thr-122, Asn-126, and Asp-127 each contribute to the L-aspartate site. Asn-126 lines the L-citrulline pocket. The L-citrulline site is built by Arg-130, Ser-182, Ser-191, Glu-267, and Tyr-279.

The protein belongs to the argininosuccinate synthase family. Type 1 subfamily. As to quaternary structure, homotetramer.

It localises to the cytoplasm. It carries out the reaction L-citrulline + L-aspartate + ATP = 2-(N(omega)-L-arginino)succinate + AMP + diphosphate + H(+). It functions in the pathway amino-acid biosynthesis; L-arginine biosynthesis; L-arginine from L-ornithine and carbamoyl phosphate: step 2/3. In Paraburkholderia phytofirmans (strain DSM 17436 / LMG 22146 / PsJN) (Burkholderia phytofirmans), this protein is Argininosuccinate synthase.